Consider the following 399-residue polypeptide: Tetracycline resistance protein, class A (399 aa).

12 helical membrane passes run 7 to 29 (LIVI…PVLP), 44 to 66 (HYGI…LGAL), 73 to 95 (RPVL…TAPF), 99 to 121 (LYIG…AYIA), 133 to 155 (FGFM…GLMG), 160 to 182 (HAPF…FLLP), 203 to 225 (FRWA…MQLV), 245 to 267 (ATTI…AMIT), 279 to 298 (ALML…AFAT), 302 to 324 (MAFP…QAML), 336 to 358 (LQGS…FTAI), and 368 to 390 (GWAW…RGLW).

This sequence belongs to the major facilitator superfamily. TCR/Tet family.

The protein localises to the cell inner membrane. Its function is as follows. Resistance to tetracycline by an active tetracycline efflux. This is an energy-dependent process that decreases the accumulation of the antibiotic in whole cells. This protein functions as a metal-tetracycline/H(+) antiporter. The polypeptide is Tetracycline resistance protein, class A (tetA) (Escherichia coli).